A 446-amino-acid chain; its full sequence is uncharacterized protein (446 aa).

A phosphoserine mark is found at serine 393 and serine 397. Positions 411–431 (LSSTERRDLDRVRDKQKKQDQ) are disordered.

Belongs to the IFRD family.

The protein resides in the cytoplasm. This is an uncharacterized protein from Schizosaccharomyces pombe (strain 972 / ATCC 24843) (Fission yeast).